Here is a 255-residue protein sequence, read N- to C-terminus: Putative keratin-87 protein (255 aa).

Residues Met-1–Leu-255 enclose the IF rod domain. Coiled-coil stretches lie at residues Leu-19–Val-81 and Leu-147–Ser-227.

This sequence belongs to the intermediate filament family. Heterotetramer of two type I and two type II keratins.

The sequence is that of Putative keratin-87 protein (KRT87P) from Homo sapiens (Human).